A 31-amino-acid polypeptide reads, in one-letter code: Bacteriocin leucocin-B (31 aa).

The protein resides in the secreted. Functionally, inhibits a wide spectrum of lactic acid bacteria. In Leuconostoc mesenteroides, this protein is Bacteriocin leucocin-B.